Reading from the N-terminus, the 108-residue chain is Pyrimidine/purine nucleoside phosphorylase (108 aa).

Belongs to the nucleoside phosphorylase PpnP family.

The catalysed reaction is a purine D-ribonucleoside + phosphate = a purine nucleobase + alpha-D-ribose 1-phosphate. It catalyses the reaction adenosine + phosphate = alpha-D-ribose 1-phosphate + adenine. It carries out the reaction cytidine + phosphate = cytosine + alpha-D-ribose 1-phosphate. The enzyme catalyses guanosine + phosphate = alpha-D-ribose 1-phosphate + guanine. The catalysed reaction is inosine + phosphate = alpha-D-ribose 1-phosphate + hypoxanthine. It catalyses the reaction thymidine + phosphate = 2-deoxy-alpha-D-ribose 1-phosphate + thymine. It carries out the reaction uridine + phosphate = alpha-D-ribose 1-phosphate + uracil. The enzyme catalyses xanthosine + phosphate = alpha-D-ribose 1-phosphate + xanthine. Functionally, catalyzes the phosphorolysis of diverse nucleosides, yielding D-ribose 1-phosphate and the respective free bases. Can use uridine, adenosine, guanosine, cytidine, thymidine, inosine and xanthosine as substrates. Also catalyzes the reverse reactions. The polypeptide is Pyrimidine/purine nucleoside phosphorylase (Acinetobacter baumannii (strain AB307-0294)).